A 372-amino-acid chain; its full sequence is Cytochrome b (372 aa).

4 helical membrane-spanning segments follow: residues 25 to 45, 69 to 90, 105 to 125, and 170 to 190; these read FGSMLLTCSIIQMTTGFFLAI, WCLQNLHSIGASMFFICIYIHI, WMSGILLLTILMATSFFGYVL, and FFALHFILPFMIMSTSSIHII. Heme b-binding residues include His75 and His89. Residues His174 and His188 each coordinate heme b. Position 193 (His193) interacts with a ubiquinone. A run of 4 helical transmembrane segments spans residues 218 to 238, 280 to 300, 312 to 332, and 339 to 358; these read YKDLFMLTLLLFTMMSIMSFS, LGGTLALLLSIMILLLPPFTH, MAQFLFWTMITTFVILTWAAS, and YITISQMASTMYFLFFIINP.

The protein belongs to the cytochrome b family. The cytochrome bc1 complex contains 3 respiratory subunits (MT-CYB, CYC1 and UQCRFS1), 2 core proteins (UQCRC1 and UQCRC2) and probably 6 low-molecular weight proteins. The cofactor is heme b.

The protein localises to the mitochondrion inner membrane. Its function is as follows. Component of the ubiquinol-cytochrome c reductase complex (complex III or cytochrome b-c1 complex) that is part of the mitochondrial respiratory chain. The b-c1 complex mediates electron transfer from ubiquinol to cytochrome c. Contributes to the generation of a proton gradient across the mitochondrial membrane that is then used for ATP synthesis. This Acrochordus granulatus (Rasp-skinned water snake) protein is Cytochrome b (MT-CYB).